The sequence spans 482 residues: Glutamate--tRNA ligase 2 (482 aa).

The 'HIGH' region signature appears at Pro-16–Asn-26. 4 residues coordinate Zn(2+): Cys-113, Cys-115, Cys-140, and His-142. Positions Pro-257 to Arg-261 match the 'KMSKS' region motif. Lys-260 lines the ATP pocket.

It belongs to the class-I aminoacyl-tRNA synthetase family. Glutamate--tRNA ligase type 1 subfamily. In terms of assembly, monomer. Requires Zn(2+) as cofactor.

It localises to the cytoplasm. It carries out the reaction tRNA(Glu) + L-glutamate + ATP = L-glutamyl-tRNA(Glu) + AMP + diphosphate. Its function is as follows. Catalyzes the attachment of glutamate to tRNA(Glu) in a two-step reaction: glutamate is first activated by ATP to form Glu-AMP and then transferred to the acceptor end of tRNA(Glu). The chain is Glutamate--tRNA ligase 2 from Acidithiobacillus ferrooxidans (strain ATCC 53993 / BNL-5-31) (Leptospirillum ferrooxidans (ATCC 53993)).